Here is a 50-residue protein sequence, read N- to C-terminus: Protein PsbN (50 aa).

Residues 14–34 form a helical membrane-spanning segment; sequence VAVTILAILLALTGFGLWTAF.

The protein belongs to the PsbN family.

The protein localises to the cellular thylakoid membrane. Its function is as follows. May play a role in photosystem I and II biogenesis. In Prochlorococcus marinus (strain MIT 9312), this protein is Protein PsbN.